The chain runs to 687 residues: Adhesion G-protein coupled receptor G1 (687 aa).

An N-terminal signal peptide occupies residues 1–25 (MTAQSLLQTTLFLLSLLFLVQGAHG). A heparin-binding site is contributed by 26–33 (RGHREDFR). Residues 26-402 (RGHREDFRFC…VEVDAVHKHY (377 aa)) lie on the Extracellular side of the membrane. Intrachain disulfides connect Cys-35-Cys-91 and Cys-121-Cys-177. 3 N-linked (GlcNAc...) asparagine glycosylation sites follow: Asn-39, Asn-148, and Asn-171. Heparin is bound at residue 190–200 (LKHPQKASRRP). Positions 224–395 (DTVSFEEDRI…AVLMVSSVEV (172 aa)) constitute a GAIN-B domain. 4 N-linked (GlcNAc...) asparagine glycosylation sites follow: Asn-234, Asn-303, Asn-324, and Asn-341. Intrachain disulfides connect Cys-346-Cys-377 and Cys-366-Cys-379. Residues 346 to 395 (CVFWVEDPTLSSPGHWSSAGCETVRRETQTSCFCNHLTYFAVLMVSSVEV) form a GPS region. Residues 384–397 (YFAVLMVSSVEVDA) form a stachel region. Residues 403–423 (LSLLSYVGCVVSALACIVTIA) traverse the membrane as a helical segment. Topologically, residues 424 to 442 (AYLCSRRKPRDYTIKVHMN) are cytoplasmic. The helical transmembrane segment at 443–463 (LLLAVFLLDTSFLLSEPVALT) threads the bilayer. At 464–470 (GSEAGCR) the chain is on the extracellular side. The helical transmembrane segment at 471–491 (ASAIFLHFSLLACLSWMGLEG) threads the bilayer. The Cytoplasmic segment spans residues 492-512 (YNLYRLVVEVFGTYVPGYLLK). Residues 513–533 (LSAMGWGFPIFLVTLVALVDV) form a helical membrane-spanning segment. Residues 534 to 570 (DNYGPIILAVHRTPEGVIYPSMCWIRDSLVSYITNLG) are Extracellular-facing. The chain crosses the membrane as a helical span at residues 571 to 591 (LFSLVFLFNMAMLATMVVQIL). Over 592–603 (RLRPHTQKWSHV) the chain is Cytoplasmic. Residues 604 to 624 (LTLLGLSLVLGLPWALIFFSF) traverse the membrane as a helical segment. The Extracellular segment spans residues 625–630 (ASGTFQ). Residues 631 to 651 (LVVLYLFSIITSFQGFLIFIW) form a helical membrane-spanning segment. Topologically, residues 652–687 (YWSMRLQARGGPSPLKSNSDSARLPISSGSTSSSRI) are cytoplasmic. The segment at 664–687 (SPLKSNSDSARLPISSGSTSSSRI) is disordered. The segment covering 678–687 (SSGSTSSSRI) has biased composition (low complexity).

It belongs to the G-protein coupled receptor 2 family. LN-TM7 subfamily. In terms of assembly, heterodimer of 2 chains generated by proteolytic processing; the large extracellular N-terminal fragment (ADGRG1 NT) and the membrane-bound C-terminal fragment (ADGRG1-CT) predominantly remain associated and non-covalently linked. ADGRG1 NT self-associates in a trans-trans manner; the homophilic interaction enhances receptor signaling. Interacts with TGM2. Interacts with heparin; leading to the reduction of ADGRG1 shedding. Interacts with COL3A1. Part of a GPCR-tetraspanin complex at least consisting of ADGRG1, CD81, eventually CD9, and GNA11 in which CD81 is enhancing the association of ADGRG1 with GNA11. Autoproteolytically cleaved into 2 fragments; the large extracellular N-terminal fragment (ADGRG1 NT) and the membrane-bound C-terminal fragment (ADGRG1 CT) predominantly remain associated and non-covalently linked. Shedding to yield the secreted ADGRG1 N-terminal fragment seems to involve metalloprotease(s). Post-translationally, ubiquitinated. Undergoes polyubiquitination upon activation.

The protein resides in the cell membrane. The protein localises to the secreted. It localises to the membrane raft. Its activity is regulated as follows. Forms a heterodimer of 2 chains generated by proteolytic processing that remain associated through non-covalent interactions mediated by the GAIN-B domain. In the inactivated receptor, the Stachel sequence (also named stalk) is embedded in the GAIN-B domain, where it adopts a beta-strand conformation. On activation, the Stachel moves into the 7 transmembrane region and adopts a twisted hook-shaped configuration that forms contacts within the receptor, leading to coupling of a G-alpha protein, which activates signaling. The cleaved GAIN-B and N-terminal domains can then dissociate from the rest of the receptor. Functionally, adhesion G-protein coupled receptor (aGPCR) for steroid hormone 17alpha-hydroxypregnenolone (17-OH), which is involved in cell adhesion and cell-cell interactions. Ligand binding causes a conformation change that triggers signaling via guanine nucleotide-binding proteins (G proteins) and modulates the activity of downstream effectors, such as RhoA pathway. ADGRG1 is coupled to G(12) and/or G(13) G proteins (GNA12 and GNA13, respectively) and mediates the activation Rho small GTPases. Acts as a potent suppressor of ferroptosis: binding to 17-OH-binding initiates signaling that down-regulates CD36 and alleviates ferroptosis-induced liver injury. Ligand-binding also induces cell adhesion activity via association with proteins such as collagen III/COL3A1 and TGM2. Mediates cell matrix adhesion in developing neurons and hematopoietic stem cells. Involved in cortical development, specifically in maintenance of the pial basement membrane integrity and in cortical lamination: association with COL3A1 in the developing brain inhibits neuronal migration via activation of the RhoA pathway. Together with TGM2, acts as a regulator of myelination and myelin repair in oligodendrocyte precursor cells. Acts as a hemostatic sensor of shear force: G protein-coupled receptor signaling is activated in response to shear force in platelets, promoting G(13) G protein signaling, and platelet shape change and aggregation in a COL3A1-dependent manner. Acts as an inhibitor of VEGFA production thereby inhibiting angiogenesis through a signaling pathway mediated by PRKCA. Plays a role in the maintenance of hematopoietic stem cells in bone marrow niche. Plays an essential role in testis development. The polypeptide is Adhesion G-protein coupled receptor G1 (ADGRG1) (Gorilla gorilla gorilla (Western lowland gorilla)).